Consider the following 103-residue polypeptide: Small ribosomal subunit protein uS10 (103 aa).

This sequence belongs to the universal ribosomal protein uS10 family. In terms of assembly, part of the 30S ribosomal subunit.

Its function is as follows. Involved in the binding of tRNA to the ribosomes. The sequence is that of Small ribosomal subunit protein uS10 from Psychrobacter sp. (strain PRwf-1).